The primary structure comprises 313 residues: tRNA dimethylallyltransferase (313 aa).

Position 17–24 (17–24) interacts with ATP; the sequence is GPTASGKT. 19–24 serves as a coordination point for substrate; sequence TASGKT. Interaction with substrate tRNA stretches follow at residues 42–45, 166–170, and 247–252; these read DSAL, QRLSR, and RCVGYR.

It belongs to the IPP transferase family. In terms of assembly, monomer. Mg(2+) is required as a cofactor.

The enzyme catalyses adenosine(37) in tRNA + dimethylallyl diphosphate = N(6)-dimethylallyladenosine(37) in tRNA + diphosphate. Its function is as follows. Catalyzes the transfer of a dimethylallyl group onto the adenine at position 37 in tRNAs that read codons beginning with uridine, leading to the formation of N6-(dimethylallyl)adenosine (i(6)A). The protein is tRNA dimethylallyltransferase of Yersinia pseudotuberculosis serotype O:1b (strain IP 31758).